Here is a 495-residue protein sequence, read N- to C-terminus: Probable histidine ammonia-lyase (495 aa).

Residues 141–143 (ASG) constitute a cross-link (5-imidazolinone (Ala-Gly)). S142 is modified (2,3-didehydroalanine (Ser)).

The protein belongs to the PAL/histidase family. Contains an active site 4-methylidene-imidazol-5-one (MIO), which is formed autocatalytically by cyclization and dehydration of residues Ala-Ser-Gly.

It is found in the cytoplasm. It carries out the reaction L-histidine = trans-urocanate + NH4(+). The protein operates within amino-acid degradation; L-histidine degradation into L-glutamate; N-formimidoyl-L-glutamate from L-histidine: step 1/3. This Thermoplasma volcanium (strain ATCC 51530 / DSM 4299 / JCM 9571 / NBRC 15438 / GSS1) protein is Probable histidine ammonia-lyase.